Here is a 66-residue protein sequence, read N- to C-terminus: MRWLMRKCIRCGRYTLNHDRCPYCGGELIVPHPPRFSPEDKYVAYRLEMKIKTGILDLNKIPVYDP.

Belongs to the NOP10 family.

In terms of biological role, involved in ribosome biogenesis; more specifically in 18S rRNA pseudouridylation and in cleavage of pre-rRNA. The polypeptide is Ribosome biogenesis protein Nop10 (Staphylothermus marinus (strain ATCC 43588 / DSM 3639 / JCM 9404 / F1)).